Reading from the N-terminus, the 363-residue chain is Putative glutamate--cysteine ligase 2-3 (363 aa).

It belongs to the glutamate--cysteine ligase type 2 family. YbdK subfamily.

It catalyses the reaction L-cysteine + L-glutamate + ATP = gamma-L-glutamyl-L-cysteine + ADP + phosphate + H(+). ATP-dependent carboxylate-amine ligase which exhibits weak glutamate--cysteine ligase activity. The chain is Putative glutamate--cysteine ligase 2-3 from Rubrobacter xylanophilus (strain DSM 9941 / JCM 11954 / NBRC 16129 / PRD-1).